The primary structure comprises 492 residues: Catalase isozyme 1 (492 aa).

Catalysis depends on residues H65 and N138. Y348 contacts heme.

This sequence belongs to the catalase family. Homotetramer. Heme is required as a cofactor. As to expression, scutella, milky endosperm of immature kernels, leaves and epicotyls.

It is found in the peroxisome. It catalyses the reaction 2 H2O2 = O2 + 2 H2O. Functionally, occurs in almost all aerobically respiring organisms and serves to protect cells from the toxic effects of hydrogen peroxide. This Zea mays (Maize) protein is Catalase isozyme 1 (CAT1).